We begin with the raw amino-acid sequence, 1079 residues long: Extracellular calcium-sensing receptor (1079 aa).

The N-terminal stretch at 1–19 (MAFSSCCWILLALTWCTSA) is a signal peptide. Residues 20–610 (YGPDQRAQKK…KEIEFLSWTE (591 aa)) lie on the Extracellular side of the membrane. A ligand-binding 1 (LB1) region spans residues 22 to 188 (PDQRAQKKGD…QFKSFLRTIP (167 aa)). A disulfide bridge connects residues Cys-60 and Cys-101. 66-70 (RGFRW) contributes to the phosphate binding site. The Ca(2+) site is built by Ile-81, Ser-84, Leu-87, and Leu-88. An N-linked (GlcNAc...) asparagine glycan is attached at Asn-90. A Ca(2+)-binding site is contributed by Thr-100. Asn-130 carries N-linked (GlcNAc...) asparagine glycosylation. Thr-145 contacts Ca(2+). Ser-147, Ala-168, and Ser-170 together coordinate L-tryptophan. Residues Ser-170, Pro-188, Asp-190, Glu-231, and Asp-234 each contribute to the Ca(2+) site. The ligand-binding 2 (LB2) stretch occupies residues 189–324 (NDEHQATAMA…GGTIGFALKA (136 aa)). Cystine bridges form between Cys-236–Cys-561, Cys-358–Cys-395, Cys-437–Cys-449, Cys-542–Cys-562, Cys-546–Cys-565, Cys-568–Cys-582, and Cys-585–Cys-598. Spermine-binding residues include Asp-238 and Ser-240. Residues Asn-261 and Asn-287 are each glycosylated (N-linked (GlcNAc...) asparagine). Position 297 (Glu-297) interacts with Ca(2+). L-tryptophan is bound at residue Glu-297. Asn-386 and Asn-400 each carry an N-linked (GlcNAc...) asparagine glycan. 415 to 417 (RIS) provides a ligand contact to phosphate. N-linked (GlcNAc...) asparagine glycans are attached at residues Asn-446, Asn-468, and Asn-488. Residue Tyr-489 coordinates Ca(2+). Asn-541 is a glycosylation site (N-linked (GlcNAc...) asparagine). The segment at 542 to 612 (CSRDCLAGTR…IEFLSWTEPF (71 aa)) is cysteine-rich (CR). Residue Gly-557 participates in Ca(2+) binding. Residue Asn-594 is glycosylated (N-linked (GlcNAc...) asparagine). A helical transmembrane segment spans residues 611 to 636 (PFGIALTLFAVLGIFLTAFVLGVFIK). Residues 637-648 (FRNTPIVKATNR) are Cytoplasmic-facing. An intracellular loop 1 (ICL1) region spans residues 637 to 648 (FRNTPIVKATNR). The chain crosses the membrane as a helical span at residues 649 to 668 (ELSYLLLFSLLCCFSSSLFF). The Extracellular segment spans residues 669–674 (IGEPQD). The chain crosses the membrane as a helical span at residues 675–698 (WTCRLRQPAFGISFVLCISCILVK). Residues 699–722 (TNRVLLVFEAKIPTSFHRKWWGLN) are Cytoplasmic-facing. Residues 699–722 (TNRVLLVFEAKIPTSFHRKWWGLN) are intracellular loop 2 (ICL2). A helical transmembrane segment spans residues 723–745 (LQFLLVFLCTFMQIVICAIWLYT). Residues 746–769 (APPSSYRNHELEDEIIFITCHEGS) are Extracellular-facing. A helical transmembrane segment spans residues 770–789 (LMALGFLIGYTCLLAAICFF). Residues 790-805 (FAFKSRKLPENFNEAK) lie on the Cytoplasmic side of the membrane. Positions 790–805 (FAFKSRKLPENFNEAK) are intracellular loop 3 (ICL3). The helical transmembrane segment at 806–828 (FITFSMLIFFIVWISFIPAYAST) threads the bilayer. At 829–832 (YGKF) the chain is on the extracellular side. The helical transmembrane segment at 833 to 854 (VSAVEVIAILAASFGLLACIFF) threads the bilayer. Residues 855 to 1079 (NKVYIILFKP…STVTENMLHS (225 aa)) are Cytoplasmic-facing. The tract at residues 855–1079 (NKVYIILFKP…STVTENMLHS (225 aa)) is C-terminus. Positions 880–900 (AFKVAARATLRRSNVSRQRSS) are interaction with RNF19A. Thr-888 bears the Phosphothreonine mark. An arginine-rich retention motif region spans residues 890–898 (RRSNVSRQR). Phosphoserine occurs at positions 892, 899, and 920. Over residues 892 to 918 (SNVSRQRSSSLGGSTGSTPSSSISSKS) the composition is skewed to low complexity. The interval 892 to 963 (SNVSRQRSSS…QPQLQQQPRC (72 aa)) is disordered. Positions 945 to 954 (PQAPSTPQPQ) are enriched in pro residues. Ser-1062 is modified (phosphoserine).

This sequence belongs to the G-protein coupled receptor 3 family. As to quaternary structure, homodimer; disulfide-linked. Interacts with VCP. Interacts with ARRB1. Post-translationally, phosphorylation at Thr-888 by PKC impairs coupling with G(q)/G(11) G-proteins, while it does not affect G(i)/G(o)-coupling. Phosphorylation at Ser-892 by PKC and Ser-899 by PKA promote plasma membrane localization. Ubiquitinated by RNF19A; which induces proteasomal degradation.

The protein localises to the cell membrane. Its activity is regulated as follows. In resting state, adopts an open conformation, anion-binding promoting the inactive configuration. Upon aromatic amino acid-binding, the groove in the extracellular venus flytrap module is closed, thereby inducing the formation of a novel homodimer interface between subunits. Calcium ions stabilize the active state by enhancing homodimer interactions between membrane-proximal domains to fully activate the receptor. Upon activation, the homodimer adopts an asymmetric configuration of the 7-transmembrane region that primes one protomer for G-protein coupling. G-protein binding expands the transmembrane dimer interface; the restriction imposed by the receptor dimer, in combination with intracellular loop 2 (ICL2), enables G-protein activation by facilitating conformational transition of G-protein alpha. Coupling to different classes of G-proteins results in distinct CASR-G-protein interfaces. In contrast to human protein, not activated by AMG 416, a D-amino acid-containing peptide agonist: this is probably due to the absence of a Cys residue at position 482, which forms a disulfide bond with the AMG 416 peptide agonist in human and that is replaced by a Tyr residue in pig. In terms of biological role, G-protein-coupled receptor that senses changes in the extracellular concentration of calcium ions and plays a key role in maintaining calcium homeostasis. Senses fluctuations in the circulating calcium concentration: activated by elevated circulating calcium, leading to decreased parathyroid hormone (PTH) secretion in parathyroid glands. In kidneys, acts as a key regulator of renal tubular calcium resorption. Ligand binding causes a conformation change that triggers signaling via guanine nucleotide-binding proteins (G-proteins) and modulates the activity of downstream effectors. CASR is coupled with different G(q)/G(11), G(i)/G(o)- or G(s)-classes of G-proteins depending on the context. In the parathyroid and kidney, CASR signals through G(q)/G(11) and G(i)/G(o) G-proteins: G(q)/G(11) coupling activates phospholipase C-beta, releasing diacylglycerol (DAG) and inositol 1,4,5-trisphosphate (IP3) second messengers, while G(i)/G(o) coupling mediates inhibition of adenylate cyclase activity. The G-protein-coupled receptor activity is activated by a co-agonist mechanism: aromatic amino acids, such as Trp or Phe, act concertedly with divalent cations, such as calcium or magnesium, to achieve full receptor activation. Acts as an activator of the NLRP3 inflammasome via G(i)/G(o)-mediated signaling: down-regulation of cyclic AMP (cAMP) relieving NLRP3 inhibition by cAMP. Acts as a regulator of proton-sensing receptor GPR68 in a seesaw manner: CASR-mediated signaling inhibits GPR68 signaling in response to extracellular calcium, while GPR68 inhibits CASR in presence of extracellular protons. In Sus scrofa (Pig), this protein is Extracellular calcium-sensing receptor (CASR).